A 294-amino-acid polypeptide reads, in one-letter code: Ribosomal RNA small subunit methyltransferase I (294 aa).

Belongs to the methyltransferase superfamily. RsmI family.

It is found in the cytoplasm. The enzyme catalyses cytidine(1402) in 16S rRNA + S-adenosyl-L-methionine = 2'-O-methylcytidine(1402) in 16S rRNA + S-adenosyl-L-homocysteine + H(+). Catalyzes the 2'-O-methylation of the ribose of cytidine 1402 (C1402) in 16S rRNA. This Mesorhizobium japonicum (strain LMG 29417 / CECT 9101 / MAFF 303099) (Mesorhizobium loti (strain MAFF 303099)) protein is Ribosomal RNA small subunit methyltransferase I.